The primary structure comprises 195 residues: Ethylene-responsive transcription factor ERF018 (195 aa).

Residues 1 to 13 (MVKQAMKEEEKKR) are compositionally biased toward basic and acidic residues. Positions 1-22 (MVKQAMKEEEKKRNTAMQSKYK) are disordered. The segment at residues 20-77 (KYKGVRKRKWGKWVSEIRLPHSRERIWLGSYDTPEKAARAFDAAQFCLRGGDANFNFP) is a DNA-binding region (AP2/ERF).

Belongs to the AP2/ERF transcription factor family. ERF subfamily.

It localises to the nucleus. In terms of biological role, probably acts as a transcriptional activator. Binds to the GCC-box pathogenesis-related promoter element. May be involved in the regulation of gene expression by stress factors and by components of stress signal transduction pathways. The protein is Ethylene-responsive transcription factor ERF018 (ERF018) of Arabidopsis thaliana (Mouse-ear cress).